Reading from the N-terminus, the 629-residue chain is Hemocyanin C chain (629 aa).

Cu cation-binding residues include His-175, His-179, His-206, His-326, His-330, and His-366. A glycan (N-linked (GlcNAc...) asparagine) is linked at Asn-451. Residues Cys-537 and Cys-585 are joined by a disulfide bond. Asn-618 is a glycosylation site (N-linked (GlcNAc...) asparagine).

Belongs to the tyrosinase family. Hemocyanin subfamily. As to quaternary structure, tarantula hemocyanin is a 24-chain polymer with seven different chains identified. Hemolymph.

Its subcellular location is the secreted. The protein localises to the extracellular space. Functionally, hemocyanins are copper-containing oxygen carriers occurring freely dissolved in the hemolymph of many mollusks and arthropods. This is Hemocyanin C chain (HCC) from Aphonopelma sp. (American tarantula).